We begin with the raw amino-acid sequence, 366 residues long: tRNA/tmRNA (uracil-C(5))-methyltransferase (366 aa).

The S-adenosyl-L-methionine site is built by Q189, Y217, N222, E238, and D298. The Nucleophile role is filled by C323. The Proton acceptor role is filled by E357.

Belongs to the class I-like SAM-binding methyltransferase superfamily. RNA M5U methyltransferase family. TrmA subfamily.

The catalysed reaction is uridine(54) in tRNA + S-adenosyl-L-methionine = 5-methyluridine(54) in tRNA + S-adenosyl-L-homocysteine + H(+). It catalyses the reaction uridine(341) in tmRNA + S-adenosyl-L-methionine = 5-methyluridine(341) in tmRNA + S-adenosyl-L-homocysteine + H(+). Functionally, dual-specificity methyltransferase that catalyzes the formation of 5-methyluridine at position 54 (m5U54) in all tRNAs, and that of position 341 (m5U341) in tmRNA (transfer-mRNA). The protein is tRNA/tmRNA (uracil-C(5))-methyltransferase of Shewanella putrefaciens (strain CN-32 / ATCC BAA-453).